Here is a 291-residue protein sequence, read N- to C-terminus: Putative transport permease ycf38 (291 aa).

6 consecutive transmembrane segments (helical) span residues 47–67 (ATLM…GGLF), 87–107 (SGII…PLMF), 135–155 (FMTC…LFMG), 165–185 (LIFA…SLAL), 195–215 (LLAL…ALAP), and 262–282 (ISLG…AYIV). In terms of domain architecture, ABC transmembrane type-2 spans 47 to 289 (ATLMAGIIQP…YIVSNILKAR (243 aa)).

It belongs to the ABC-2 integral membrane protein family.

It localises to the plastid. Its subcellular location is the chloroplast membrane. The sequence is that of Putative transport permease ycf38 (ycf38) from Porphyra purpurea (Red seaweed).